The chain runs to 214 residues: Redox-sensing transcriptional repressor Rex (214 aa).

A DNA-binding region (H-T-H motif) is located at residues 16–55; it reads IYFRYLNVLKDANKQRVSSTELSEAVQVDSATIRRDFSYF. 90–95 provides a ligand contact to NAD(+); sequence GVGSLG.

It belongs to the transcriptional regulatory Rex family. In terms of assembly, homodimer.

It is found in the cytoplasm. Modulates transcription in response to changes in cellular NADH/NAD(+) redox state. This Limosilactobacillus reuteri (strain DSM 20016) (Lactobacillus reuteri) protein is Redox-sensing transcriptional repressor Rex.